Consider the following 372-residue polypeptide: Cytochrome b (372 aa).

Helical transmembrane passes span 25 to 45 (FGSM…FLAI), 69 to 90 (WIMQ…YTHI), 105 to 125 (WLSG…GYVL), and 170 to 190 (FFAL…IHIM). Residues H75 and H89 each contribute to the heme b site. Residues H174 and H188 each contribute to the heme b site. H193 is a binding site for a ubiquinone. 4 consecutive transmembrane segments (helical) span residues 218 to 238 (YKDM…MSFM), 280 to 300 (LGGT…PFTH), 312 to 332 (ITQV…WTAT), and 339 to 358 (FILI…IIHP).

The protein belongs to the cytochrome b family. In terms of assembly, the cytochrome bc1 complex contains 3 respiratory subunits (MT-CYB, CYC1 and UQCRFS1), 2 core proteins (UQCRC1 and UQCRC2) and probably 6 low-molecular weight proteins. Heme b serves as cofactor.

It localises to the mitochondrion inner membrane. Functionally, component of the ubiquinol-cytochrome c reductase complex (complex III or cytochrome b-c1 complex) that is part of the mitochondrial respiratory chain. The b-c1 complex mediates electron transfer from ubiquinol to cytochrome c. Contributes to the generation of a proton gradient across the mitochondrial membrane that is then used for ATP synthesis. This is Cytochrome b (MT-CYB) from Pseudechis australis (Mulga snake).